Here is a 201-residue protein sequence, read N- to C-terminus: NAD(P)H-dependent FMN reductase ntnL (201 aa).

FMN contacts are provided by residues arginine 12, 90-93, and tyrosine 120; that span reads EYNG.

Homodimer.

It catalyses the reaction FMNH2 + NADP(+) = FMN + NADPH + 2 H(+). It carries out the reaction FMNH2 + NAD(+) = FMN + NADH + 2 H(+). It functions in the pathway secondary metabolite biosynthesis; terpenoid biosynthesis. Functionally, NAD(P)H-dependent FMN reductase; part of the gene cluster that mediates the biosynthesis of the meroterpenoids nectripenoids A and B, as well as cochliquninone D and isocochliquninone E. The pathway probably begins with the HR-PKS ntnH that catalyzes two chain-extension steps to form a reduced triketide, which then primes the SAT domain in the NR-PKS ntnG to initiate three more cycles of extension to give a linear hexaketide corresponding to the polyketide part of nectripenoids. The FAD-dependent monooxygenase ntnJ then performs an oxidative decarboxylation at C11 of the ntnH/ntnG product, via an electrophilic aromatic hydroxylation with concomitant ipso-decarboxylation. The membrane-bound polyprenyl transferase ntnF then introduces a farnesyl group before the FAD-dependent monooxygenase ntnK functions as the first epoxidase on terminal C12'-C13' olefin, followed by a second epoxidation on C7'-C8' catalyzed by ntnA. The terpene cyclase/mutase ntnI then initiates the sequential tricyclic ring formation through protonation of the terminal epoxide and catalyzes the regioselective and stereoselective 6/6/6-tricyclic ring formation. The cytochrome P450 monooxygenase ntnM may then hydroxylate C1'. This Nectria sp protein is NAD(P)H-dependent FMN reductase ntnL.